Consider the following 1742-residue polypeptide: MQAMDPASRGFYEEDGKDLDFYDFEPLPTLPEDEENVSLADILSLRDRGLSEQEAWAVCLECSLSMRSVAHAAIFQTLCITPDTLAFNTSGNVCFMEQLSDDPEGAFVPPEFDLTGNTFEAHIYSLGATLKAALEYVPEPELEPKLSTDLEGLLSQMQAEDPRERPDLASIIALCEEKMQPVSSCRLCRSLSAIGRRVLSIESFGAFQELSENTWRGRPAPRNVGPKKMPGDLSTDPEALFPSKGLLQPPASRDAEQEAGQRPRAPSPKPLLSAPVRNGENPGQEGLADLVLDARCPLGELDRDNLRRSRLKKAQTFPRLLQESTETSTLCLSLNGSRNQLAISEFFPPDPRKLFLEGKNGLSGFKTQSKSRLWPEQEPGVQLDKTPGAGRNPHRSPGASGQLEASSPSQGSVEYKPSPSPVDAGDSDHEGHIPRSEEKIPEESRQPGSTATEQSLSLKDLLSKLGRPFREYELWALCLSCLSTLQTHKEHPAHLCLDNVLVAEDGTVFFGPPPANGAYNSLFLAPEVSEEKLVTEKASVYCVAAVLWTAAKFSVPRDHKLALPRRLKTLLLDMARRHASERPSAAEAIKVCSSYLLQRGMDSSKILAHLRASTCKVHPEEETIGLQNAFSVVELKSTTAPAPESSPGFLQVSNDTKLVAVPGPVPGLPPCCKEACELPAAFTSEATHFKPIVLAQDASVTRDQLALPSESNEKPKEGSGHLDREGTRKQAALELVEATDLKMSNQLSPGPELQGATPDPDGDSGSPSSATECSCPHGPALVTQQKGTSGTPSSPASSLPPEHRPDGEGPLGTTVLPGPTSASQGSRHPCKPPRGKAAASPSSPRGSDGHPEKPRPADRKLCPSSVDTSSPPKMTACPSLQEAMRLIQEEFAFDGYMDNGLEALIMGEYIYALKDLTFATFCGAISEKFCDLYWDEQLLKNLFKVVNGPASPSESTSEEPGSQPEHSPSRCSLSSKRPSLHGLGKEKPATTWGSGGPCSPTALSDIDSDTLSQGNFEVGFRSQKSIKVTREQQPEAEVGGQPGPSQDSTSHASDTVARLARSEDGGPAGSPGASDFQNCSPGWSSAFYEADCFGADVYNYVKDLERQKTNGHTELEAQSPELEQQLMIEKRNYRKTLKFYQKLLQKEKRNKGSEVRTMLSKLRGQLDEMKSKVQFLSLVKKYLQVMYAERWGLEPCALPVIVNIAAAPCDTLDFSPLDESSSLIFYNVNKHPGSGRQKKARILQAGTPLGLMAYLYSSDAFLEGYVQQFLYTFRYFCTPHDFLHFLLDRISSTLSRAHQDPTSTFTKIYRRSLCVLQAWVEDCYTVDFIRNAGLLGQLEDFISSKILPLDGTAEHLLALLEVGTERRADSASRGADLEDPKEAEEDTRPFNALCKRFSEDGITRKSFSWRLPRGNGLVLPHHKERQYTIASALPKPCFFEDFYGPYAKASEKGPYFLTEYSTNQLFTQLTLLQQELFQKCHPVHFLNSRALGVMDKSAAIPKASSSESLSAKTCSLFLPNYVQDKYLLQLLRNADDVSTWVAAEIVTSHTSKLQVNLLSKFLLIAKSCYEQRNFATAMQILGGLEHLAVRQSPAWRILPAKIAEVMEELKAVEVFLKSDSLCLMEGRRFRAQPTLPSAHLLAMHIQQLETGGFTMTNGAHRWSKLRNIAKVASQVHAFQENPYTFSPDPKLQAHLKQRIARFSGADVSILAADNRANFHQIPGEKHSRKIQDKLRRMKATFQ.

Residues Val37–Gly217 form the KIND 1 domain. Disordered stretches follow at residues Trp215 to Ala288 and Phe365 to Ser455. A Phosphoserine modification is found at Ser267. Residues Leu403–Ser412 are compositionally biased toward polar residues. Residues Asp426–Arg445 are compositionally biased toward basic and acidic residues. Residues Leu456–Glu620 form the KIND 2 domain. 4 disordered regions span residues Asp703–Thr727, Ser744–Ala876, Gly948–Ile1006, and Val1028–Phe1076. Over residues Ser711–Thr727 the composition is skewed to basic and acidic residues. Residues Gly755 to Thr771 are compositionally biased toward low complexity. Residues Val782 to Thr791 show a composition bias toward polar residues. A compositionally biased stretch (basic and acidic residues) spans Ser847–Leu861. Over residues Pro949–Glu965 the composition is skewed to low complexity. Position 951 is a phosphoserine (Ser951). The span at Gly1043–Ser1053 shows a compositional bias: polar residues. Residues His1112 to Ser1177 adopt a coiled-coil conformation. In terms of domain architecture, N-terminal Ras-GEF spans Lys1239–Arg1367. Positions Ser1461 to Ala1712 constitute a Ras-GEF domain.

Interacts (via KIND2) with MAP2; the interaction enhances MAP2 phosphorylation and localizes KNDC1 to dendrites. Highly expressed in the brain and at low levels in the ovary. In the brain it is most prominently expressed in the cerebellum where it is restricted to the granular Purkinje cell layer.

Its subcellular location is the cell projection. The protein resides in the dendrite. The protein localises to the perikaryon. In terms of biological role, RAS-Guanine nucleotide exchange factor (GEF) that controls the negative regulation of neuronal dendrite growth by mediating a signaling pathway linking RAS and MAP2. May be involved in cellular senescence. The chain is Kinase non-catalytic C-lobe domain-containing protein 1 from Mus musculus (Mouse).